A 494-amino-acid polypeptide reads, in one-letter code: Alpha-amylase-related protein (494 aa).

A signal peptide spans 1–20 (MIKFALALTLCLAGASLSLA). Gln-21 is modified (pyrrolidone carboxylic acid). Cys-48 and Cys-104 are oxidised to a cystine. Ca(2+)-binding residues include Asn-118, Gln-169, and Asp-178. A disulfide bond links Cys-157 and Cys-171. Arg-206 contacts chloride. Asp-208 acts as the Nucleophile in catalysis. His-212 contributes to the Ca(2+) binding site. The active-site Proton donor is the Glu-245. Asn-308 and Arg-343 together coordinate chloride. 3 disulfides stabilise this stretch: Cys-376–Cys-382, Cys-418–Cys-441, and Cys-448–Cys-460.

This sequence belongs to the glycosyl hydrolase 13 family. As to quaternary structure, monomer. Requires Ca(2+) as cofactor. Chloride is required as a cofactor.

The protein localises to the secreted. It catalyses the reaction Endohydrolysis of (1-&gt;4)-alpha-D-glucosidic linkages in polysaccharides containing three or more (1-&gt;4)-alpha-linked D-glucose units.. The chain is Alpha-amylase-related protein (Amyrel) from Drosophila kikkawai (Fruit fly).